Reading from the N-terminus, the 129-residue chain is Probable cytochrome b5 2 (129 aa).

A Cytochrome b5 heme-binding domain is found at 3–79 (EKTITVEEVL…LEKFYIGNLL (77 aa)). The heme site is built by histidine 38 and histidine 62. Residues 105–125 (VKPAMWLFVLVMVVAYFAFRK) traverse the membrane as a helical segment.

The protein belongs to the cytochrome b5 family.

Its subcellular location is the endoplasmic reticulum membrane. It localises to the microsome membrane. The protein resides in the mitochondrion. Functionally, membrane bound hemoprotein which function as an electron carrier for several membrane bound oxygenases. This chain is Probable cytochrome b5 2 (oca8), found in Schizosaccharomyces pombe (strain 972 / ATCC 24843) (Fission yeast).